The primary structure comprises 237 residues: 2,3-bisphosphoglycerate-dependent phosphoglycerate mutase (237 aa).

Residues 8-15, 21-22, R60, 87-90, K98, 114-115, and 180-181 each bind substrate; these read RHGQSQWN, TG, ERHY, RR, and GN. The active-site Tele-phosphohistidine intermediate is the H9. E87 acts as the Proton donor/acceptor in catalysis.

Belongs to the phosphoglycerate mutase family. BPG-dependent PGAM subfamily. In terms of assembly, homodimer.

The enzyme catalyses (2R)-2-phosphoglycerate = (2R)-3-phosphoglycerate. The protein operates within carbohydrate degradation; glycolysis; pyruvate from D-glyceraldehyde 3-phosphate: step 3/5. In terms of biological role, catalyzes the interconversion of 2-phosphoglycerate and 3-phosphoglycerate. The protein is 2,3-bisphosphoglycerate-dependent phosphoglycerate mutase of Caulobacter vibrioides (strain ATCC 19089 / CIP 103742 / CB 15) (Caulobacter crescentus).